Consider the following 390-residue polypeptide: Succinate--CoA ligase [ADP-forming] subunit beta (390 aa).

One can recognise an ATP-grasp domain in the interval 9–245 (KHLLKKYNIP…TTQEDEHETM (237 aa)). ATP is bound by residues Lys46, 53–55 (GRG), Glu99, Ser102, and Glu107. Mg(2+)-binding residues include Asn200 and Asp214. Substrate-binding positions include Asn265 and 322-324 (GIV).

It belongs to the succinate/malate CoA ligase beta subunit family. As to quaternary structure, heterotetramer of two alpha and two beta subunits. The cofactor is Mg(2+).

It catalyses the reaction succinate + ATP + CoA = succinyl-CoA + ADP + phosphate. The enzyme catalyses GTP + succinate + CoA = succinyl-CoA + GDP + phosphate. It participates in carbohydrate metabolism; tricarboxylic acid cycle; succinate from succinyl-CoA (ligase route): step 1/1. Succinyl-CoA synthetase functions in the citric acid cycle (TCA), coupling the hydrolysis of succinyl-CoA to the synthesis of either ATP or GTP and thus represents the only step of substrate-level phosphorylation in the TCA. The beta subunit provides nucleotide specificity of the enzyme and binds the substrate succinate, while the binding sites for coenzyme A and phosphate are found in the alpha subunit. The protein is Succinate--CoA ligase [ADP-forming] subunit beta of Coxiella burnetii (strain Dugway 5J108-111).